Reading from the N-terminus, the 527-residue chain is Bifunctional purine biosynthesis protein PurH (527 aa).

The region spanning asparagine 9–valine 156 is the MGS-like domain.

The protein belongs to the PurH family.

The enzyme catalyses (6R)-10-formyltetrahydrofolate + 5-amino-1-(5-phospho-beta-D-ribosyl)imidazole-4-carboxamide = 5-formamido-1-(5-phospho-D-ribosyl)imidazole-4-carboxamide + (6S)-5,6,7,8-tetrahydrofolate. It catalyses the reaction IMP + H2O = 5-formamido-1-(5-phospho-D-ribosyl)imidazole-4-carboxamide. The protein operates within purine metabolism; IMP biosynthesis via de novo pathway; 5-formamido-1-(5-phospho-D-ribosyl)imidazole-4-carboxamide from 5-amino-1-(5-phospho-D-ribosyl)imidazole-4-carboxamide (10-formyl THF route): step 1/1. Its pathway is purine metabolism; IMP biosynthesis via de novo pathway; IMP from 5-formamido-1-(5-phospho-D-ribosyl)imidazole-4-carboxamide: step 1/1. In Mycolicibacterium paratuberculosis (strain ATCC BAA-968 / K-10) (Mycobacterium paratuberculosis), this protein is Bifunctional purine biosynthesis protein PurH.